Reading from the N-terminus, the 494-residue chain is MKKQAFSSEQYLNLQRDHILERINQFDGKLYLEFGGKMLEDFHAARVLPGYEPDNKIKLLQELKEQVEVVIAINASNIEHSKARGDLGISYDQEVLRLIDKFNELGIFVGSVVITQYAGQPAADAFRNQLEKNGIDSYLHYPIKGYPTDMDHIISPEGMGKNDYIKTSRNLIVVTAPGPGSGKLATCMSNMYHDQINGIKSGYAKFETFPVWNLPLHHPVNLAYEAATADLDDVNMIDPFHLQTYGETTVNYNRDIEIFPVLKSMLERILGKSPYASPTDMGVNMVGFAITDDEAAVEASKQEIIRRYYQTVLDFKAEKVSEAAVKKIELLMNDLGITPADRKVAVVARQKAEETGGPALAFELPNGEIVTGKNSELFGPTAAALINAIKKSADIAKEVKLIEPEVVKPIQGLKIDHLGSRNPRLHSNEILIALAITATENPDAARAMEELGNLKGSEAHSTIILTDEDKNVLRKLGINVTFDPYYQYDRLYRK.

Belongs to the UPF0371 family.

The sequence is that of UPF0371 protein SPJ_0333 from Streptococcus pneumoniae (strain JJA).